We begin with the raw amino-acid sequence, 1273 residues long: Kinesin-like protein KIN-14A (1273 aa).

The disordered stretch occupies residues 1-52; the sequence is MADQRSKTNRWNWEVSGFEPRKSSSNASFAESTGHRTTGPLLRRNSISTPSL. A coiled-coil region spans residues 59-89; the sequence is ASKVNGLKEKVKLAKEDYLELRQEATDLQEY. The Kinesin motor domain maps to 142 to 456; the sequence is NIKVFCRARP…LNYAARARNT (315 aa). An ATP-binding site is contributed by 223 to 230; that stretch reads GQTNAGKT. Coiled coils occupy residues 466 to 511, 559 to 595, and 627 to 657; these read IKKW…CVLL, QLDQEQKLQMQQQDSAIQNLQAKITDLESQVSEAVRS, and TKKLEEELKKRDALIERLHEENEKLFDRLTE. Disordered regions lie at residues 827–847 and 1136–1157; these read KPNTGRSKSTSRGSSPGRSPV and QEDTNILEQSHDRRPSLESISS. Low complexity predominate over residues 830 to 846; it reads TGRSKSTSRGSSPGRSP.

It belongs to the TRAFAC class myosin-kinesin ATPase superfamily. Kinesin family. KIN-14 subfamily. In terms of assembly, homodimer and heterodimer with KCA2. Interacts with CDKA-1. Interacts with AL1, a geminivirus (TGMV) protein essential for viral replication. Interacts with LUE1/KSS. Post-translationally, part of the phosphorylation is not CDK-dependent. In terms of tissue distribution, widely expressed.

It localises to the nucleus. Its subcellular location is the cytoplasm. The protein localises to the cytoskeleton. The protein resides in the spindle. It is found in the chromosome. It localises to the cell membrane. Its subcellular location is the phragmoplast. Its function is as follows. Kinesin-like protein required for chloroplast movements and anchor to the plasma membrane. Mediates chloroplast movement via chloroplast actin (cp-actin) filaments. Required for the chloroplast avoidance response under high intensity blue light. Mediates redundantly with CHUP1 the nuclear avoidance response under high intensity blue light. May act as a mitotic kinesin. Probably involved in division plane determination. This is Kinesin-like protein KIN-14A from Arabidopsis thaliana (Mouse-ear cress).